A 299-amino-acid polypeptide reads, in one-letter code: MSSIKIECVLPENCRCGESPVWEEVSNSLLFVDIPAKKVCRWDSFTKQVQRVTMDAPVSSVALRQSGGYVATIGTKFCALNWKEQSAVVLATVDNDKKNNRFNDGKVDPAGRYFAGTMAEETAPAVLERHQGALYSLFPDHHVKKYFDQVDISNGLDWSLDHKIFYYIDSLSYSVDAFDYDLQTGQISNRRSVYKLEKEEQIPDGMCIDAEGKLWVACYNGGRVIRLDPVTGKRLQTVKLPVDKTTSCCFGGKNYSEMYVTCARDGMDPEGLLRQPEAGGIFKITGLGVKGIAPYSYAG.

Glutamate 18 is an a divalent metal cation binding site. Substrate is bound by residues arginine 101, asparagine 103, and glutamate 121. At lysine 144 the chain carries N6-succinyllysine. The a divalent metal cation site is built by asparagine 154 and aspartate 204. Aspartate 204 (proton donor/acceptor) is an active-site residue. An N6-succinyllysine mark is found at lysine 244 and lysine 253.

The protein belongs to the SMP-30/CGR1 family. Monomer. Requires Zn(2+) as cofactor. The cofactor is Mn(2+). Ca(2+) serves as cofactor. Mg(2+) is required as a cofactor.

The protein localises to the cytoplasm. The enzyme catalyses D-glucono-1,5-lactone + H2O = D-gluconate + H(+). Its function is as follows. Gluconolactonase with low activity towards other sugar lactones, including gulonolactone and galactonolactone. Can also hydrolyze diisopropyl phosphorofluoridate and phenylacetate (in vitro). Calcium-binding protein. Modulates Ca(2+) signaling, and Ca(2+)-dependent cellular processes and enzyme activities. The sequence is that of Regucalcin (RGN) from Homo sapiens (Human).